Consider the following 70-residue polypeptide: Small ribosomal subunit protein bS21 (70 aa).

It belongs to the bacterial ribosomal protein bS21 family.

This is Small ribosomal subunit protein bS21 from Albidiferax ferrireducens (strain ATCC BAA-621 / DSM 15236 / T118) (Rhodoferax ferrireducens).